The following is a 142-amino-acid chain: Large ribosomal subunit protein uL13 (142 aa).

The protein belongs to the universal ribosomal protein uL13 family. As to quaternary structure, part of the 50S ribosomal subunit.

This protein is one of the early assembly proteins of the 50S ribosomal subunit, although it is not seen to bind rRNA by itself. It is important during the early stages of 50S assembly. In Aliivibrio fischeri (strain ATCC 700601 / ES114) (Vibrio fischeri), this protein is Large ribosomal subunit protein uL13.